Reading from the N-terminus, the 509-residue chain is Probable malate:quinone oxidoreductase (509 aa).

The disordered stretch occupies residues 490–509 (LGLNEKEPVSGASEKELVYS). A compositionally biased stretch (basic and acidic residues) spans 493-509 (NEKEPVSGASEKELVYS).

It belongs to the MQO family. FAD serves as cofactor.

The enzyme catalyses (S)-malate + a quinone = a quinol + oxaloacetate. Its pathway is carbohydrate metabolism; tricarboxylic acid cycle; oxaloacetate from (S)-malate (quinone route): step 1/1. In Geobacillus sp. (strain WCH70), this protein is Probable malate:quinone oxidoreductase.